A 208-amino-acid polypeptide reads, in one-letter code: LexA repressor (208 aa).

A DNA-binding region (H-T-H motif) is located at residues valine 29 to serine 49. Residues serine 129 and lysine 167 each act as for autocatalytic cleavage activity in the active site.

Belongs to the peptidase S24 family. As to quaternary structure, homodimer.

The catalysed reaction is Hydrolysis of Ala-|-Gly bond in repressor LexA.. Its function is as follows. Represses a number of genes involved in the response to DNA damage (SOS response), including recA and lexA. In the presence of single-stranded DNA, RecA interacts with LexA causing an autocatalytic cleavage which disrupts the DNA-binding part of LexA, leading to derepression of the SOS regulon and eventually DNA repair. In Limosilactobacillus reuteri (strain DSM 20016) (Lactobacillus reuteri), this protein is LexA repressor.